Here is a 441-residue protein sequence, read N- to C-terminus: Aminopeptidase C (441 aa).

Catalysis depends on residues Cys-70, His-361, and Asn-382.

Belongs to the peptidase C1 family.

The enzyme catalyses Inactivates bleomycin B2 (a cytotoxic glycometallopeptide) by hydrolysis of a carboxyamide bond of beta-aminoalanine, but also shows general aminopeptidase activity. The specificity varies somewhat with source, but amino acid arylamides of Met, Leu and Ala are preferred.. The chain is Aminopeptidase C (pepC) from Listeria innocua serovar 6a (strain ATCC BAA-680 / CLIP 11262).